A 145-amino-acid chain; its full sequence is 3-hydroxyacyl-[acyl-carrier-protein] dehydratase FabZ (145 aa).

Residue His-49 is part of the active site.

It belongs to the thioester dehydratase family. FabZ subfamily.

It is found in the cytoplasm. It catalyses the reaction a (3R)-hydroxyacyl-[ACP] = a (2E)-enoyl-[ACP] + H2O. Functionally, involved in unsaturated fatty acids biosynthesis. Catalyzes the dehydration of short chain beta-hydroxyacyl-ACPs and long chain saturated and unsaturated beta-hydroxyacyl-ACPs. The sequence is that of 3-hydroxyacyl-[acyl-carrier-protein] dehydratase FabZ from Rickettsia bellii (strain OSU 85-389).